A 172-amino-acid chain; its full sequence is Crossover junction endodeoxyribonuclease RuvC (172 aa).

Catalysis depends on residues aspartate 11, glutamate 71, and aspartate 143. Mg(2+) contacts are provided by aspartate 11, glutamate 71, and aspartate 143.

Belongs to the RuvC family. As to quaternary structure, homodimer which binds Holliday junction (HJ) DNA. The HJ becomes 2-fold symmetrical on binding to RuvC with unstacked arms; it has a different conformation from HJ DNA in complex with RuvA. In the full resolvosome a probable DNA-RuvA(4)-RuvB(12)-RuvC(2) complex forms which resolves the HJ. The cofactor is Mg(2+).

It localises to the cytoplasm. The enzyme catalyses Endonucleolytic cleavage at a junction such as a reciprocal single-stranded crossover between two homologous DNA duplexes (Holliday junction).. In terms of biological role, the RuvA-RuvB-RuvC complex processes Holliday junction (HJ) DNA during genetic recombination and DNA repair. Endonuclease that resolves HJ intermediates. Cleaves cruciform DNA by making single-stranded nicks across the HJ at symmetrical positions within the homologous arms, yielding a 5'-phosphate and a 3'-hydroxyl group; requires a central core of homology in the junction. The consensus cleavage sequence is 5'-(A/T)TT(C/G)-3'. Cleavage occurs on the 3'-side of the TT dinucleotide at the point of strand exchange. HJ branch migration catalyzed by RuvA-RuvB allows RuvC to scan DNA until it finds its consensus sequence, where it cleaves and resolves the cruciform DNA. This chain is Crossover junction endodeoxyribonuclease RuvC, found in Brucella anthropi (strain ATCC 49188 / DSM 6882 / CCUG 24695 / JCM 21032 / LMG 3331 / NBRC 15819 / NCTC 12168 / Alc 37) (Ochrobactrum anthropi).